We begin with the raw amino-acid sequence, 292 residues long: Bifunctional protein FolD (292 aa).

NADP(+) contacts are provided by residues glycine 166–serine 168, serine 191, and isoleucine 232.

The protein belongs to the tetrahydrofolate dehydrogenase/cyclohydrolase family. In terms of assembly, homodimer.

It carries out the reaction (6R)-5,10-methylene-5,6,7,8-tetrahydrofolate + NADP(+) = (6R)-5,10-methenyltetrahydrofolate + NADPH. The catalysed reaction is (6R)-5,10-methenyltetrahydrofolate + H2O = (6R)-10-formyltetrahydrofolate + H(+). Its pathway is one-carbon metabolism; tetrahydrofolate interconversion. Its function is as follows. Catalyzes the oxidation of 5,10-methylenetetrahydrofolate to 5,10-methenyltetrahydrofolate and then the hydrolysis of 5,10-methenyltetrahydrofolate to 10-formyltetrahydrofolate. This Synechococcus sp. (strain RCC307) protein is Bifunctional protein FolD.